Reading from the N-terminus, the 285-residue chain is Bifunctional protein FolD 2 (285 aa).

Residues 164–166, S189, and V230 contribute to the NADP(+) site; that span reads GRS.

It belongs to the tetrahydrofolate dehydrogenase/cyclohydrolase family. As to quaternary structure, homodimer.

It catalyses the reaction (6R)-5,10-methylene-5,6,7,8-tetrahydrofolate + NADP(+) = (6R)-5,10-methenyltetrahydrofolate + NADPH. The catalysed reaction is (6R)-5,10-methenyltetrahydrofolate + H2O = (6R)-10-formyltetrahydrofolate + H(+). The protein operates within one-carbon metabolism; tetrahydrofolate interconversion. Functionally, catalyzes the oxidation of 5,10-methylenetetrahydrofolate to 5,10-methenyltetrahydrofolate and then the hydrolysis of 5,10-methenyltetrahydrofolate to 10-formyltetrahydrofolate. The polypeptide is Bifunctional protein FolD 2 (Geobacter sulfurreducens (strain ATCC 51573 / DSM 12127 / PCA)).